The following is a 126-amino-acid chain: Large ribosomal subunit protein bL12 (126 aa).

This sequence belongs to the bacterial ribosomal protein bL12 family. As to quaternary structure, homodimer. Part of the ribosomal stalk of the 50S ribosomal subunit. Forms a multimeric L10(L12)X complex, where L10 forms an elongated spine to which 2 to 4 L12 dimers bind in a sequential fashion. Binds GTP-bound translation factors.

In terms of biological role, forms part of the ribosomal stalk which helps the ribosome interact with GTP-bound translation factors. Is thus essential for accurate translation. The polypeptide is Large ribosomal subunit protein bL12 (Desulforudis audaxviator (strain MP104C)).